The chain runs to 483 residues: Cytochrome P450 71A23 (483 aa).

A helical transmembrane segment spans residues 1–21 (MILFLCLIILFIITILFFKKH). A heme-binding site is contributed by C429.

The protein belongs to the cytochrome P450 family. It depends on heme as a cofactor.

Its subcellular location is the membrane. This Arabidopsis thaliana (Mouse-ear cress) protein is Cytochrome P450 71A23 (CYP71A23).